A 761-amino-acid chain; its full sequence is Wall-associated receptor kinase-like 4 (761 aa).

The N-terminal stretch at 1–26 (MKKETQNLQCIPLVISVLSLFGVSSA) is a signal peptide. Residues 27-349 (RKPPYLCNRV…EPKKPGQIKP (323 aa)) are Extracellular-facing. N-linked (GlcNAc...) asparagine glycosylation is found at asparagine 64, asparagine 166, asparagine 206, asparagine 226, and asparagine 262. Residues 278–339 (CVCSYGYFSG…CVNKPGWFTC (62 aa)) form an atypical EGF-like region. 3 disulfides stabilise this stretch: cysteine 280–cysteine 293, cysteine 316–cysteine 330, and cysteine 325–cysteine 339. A helical transmembrane segment spans residues 350 to 370 (VFQGVLIGSALLLFAFGIFGL). At 371–761 (YKFIKKQRRS…VEPLVPLRTW (391 aa)) the chain is on the cytoplasmic side. A Protein kinase domain is found at 424-697 (FNTNRVLGQG…REVSVELERI (274 aa)). Residues 430-438 (LGQGGQGTV) and lysine 452 contribute to the ATP site. At tyrosine 497 the chain carries Phosphotyrosine. The active-site Proton acceptor is aspartate 549. Phosphothreonine occurs at positions 583 and 588. Tyrosine 596 is modified (phosphotyrosine). The segment at 701-761 (SYKSEIHNDD…VEPLVPLRTW (61 aa)) is disordered. The segment covering 708-732 (NDDDDDDDDDDEDDQAMELNIEETW) has biased composition (acidic residues).

Belongs to the protein kinase superfamily. Ser/Thr protein kinase family. Expressed in the whole plant. Detected in root-shoot junctions and lateral root initiation sites.

The protein resides in the membrane. It carries out the reaction L-seryl-[protein] + ATP = O-phospho-L-seryl-[protein] + ADP + H(+). The catalysed reaction is L-threonyl-[protein] + ATP = O-phospho-L-threonyl-[protein] + ADP + H(+). Serine/threonine-protein kinase that may function as a signaling receptor of extracellular matrix component. Plays a role in plant mineral nutrients response. The chain is Wall-associated receptor kinase-like 4 (WAKL4) from Arabidopsis thaliana (Mouse-ear cress).